A 347-amino-acid polypeptide reads, in one-letter code: Phenylalanine--tRNA ligase alpha subunit (347 aa).

Mg(2+) is bound at residue Glu261.

Belongs to the class-II aminoacyl-tRNA synthetase family. Phe-tRNA synthetase alpha subunit type 1 subfamily. In terms of assembly, tetramer of two alpha and two beta subunits. It depends on Mg(2+) as a cofactor.

Its subcellular location is the cytoplasm. The catalysed reaction is tRNA(Phe) + L-phenylalanine + ATP = L-phenylalanyl-tRNA(Phe) + AMP + diphosphate + H(+). This Streptococcus mutans serotype c (strain ATCC 700610 / UA159) protein is Phenylalanine--tRNA ligase alpha subunit.